The primary structure comprises 395 residues: MLLERVRTGTQKSSDMCGYTGSPEIPQCAGCNQHIVDRFILKVLDRHWHSKCLKCNDCQIQLAEKCFSRGDSVYCKDDFFKRFGTKCAACQQGIPPTQVVRRAQEFVYHLHCFACIVCKRQLATGDEFYLMEDSRLVCKADYETAKQREAESTAKRPRTTITAKQLETLKNAYNNSPKPARHVREQLSSETGLDMRVVQVWFQNRRAKEKRLKKDAGRQRWGQYFRNMKRSRGNSKSDKDSIQEEGPDSDAEVSFTDEPSMSEMNHSNGIYNSLNDSSPVLGRQAGSNGPFSLEHGGIPTQDQYHNLRSNSPYGIPQSPASLQSMPGHQSLLSNLAFPDTGLGIIGQGGQGVAPTMRVIGVNGPSSDLSTGSSGGYPDFPVSPASWLDEVDHTQF.

2 LIM zinc-binding domains span residues C28–D78 and C87–D141. Positions A154 to K213 form a DNA-binding region, homeobox. Disordered stretches follow at residues K208–Y304 and G363–P383. Positions D257 to S278 are enriched in polar residues.

As to quaternary structure, interacts with ldb1 and with the N-terminus of rnf12. In dorsal regions at neural tube and tailbud stages and in adults predominantly in the pituitary gland and weakly in the eye and brain.

It localises to the nucleus. Transcription factor. May be involved in the specification and maintenance of differentiation of distinct neuronal and neuroendocrine tissues. Early marker for the pituitary and pineal lineages, it may be involved in specifying these lineages. This Xenopus laevis (African clawed frog) protein is LIM/homeobox protein Lhx3 (lhx3).